The sequence spans 144 residues: MPPKKKKVTGLIKLQIQAGAANPAPPVGPALGQHGVNIMEFCKAYNAATESQRGWVIPVEITVYEDRSFTFITKTPPAAKMILKAAGVEKGSGEPHKTKVAKITQAQVREIATTKLPDLNANDLDAASKIIAGTARSMGITVEG.

This sequence belongs to the universal ribosomal protein uL11 family. Part of the ribosomal stalk of the 50S ribosomal subunit. Interacts with L10 and the large rRNA to form the base of the stalk. L10 forms an elongated spine to which L12 dimers bind in a sequential fashion forming a multimeric L10(L12)X complex. In terms of processing, one or more lysine residues are methylated.

Functionally, forms part of the ribosomal stalk which helps the ribosome interact with GTP-bound translation factors. This Streptomyces avermitilis (strain ATCC 31267 / DSM 46492 / JCM 5070 / NBRC 14893 / NCIMB 12804 / NRRL 8165 / MA-4680) protein is Large ribosomal subunit protein uL11.